The chain runs to 73 residues: Small, acid-soluble spore protein C5 (73 aa).

It belongs to the alpha/beta-type SASP family.

Its function is as follows. SASP are bound to spore DNA. They are double-stranded DNA-binding proteins that cause DNA to change to an a-like conformation. They protect the DNA backbone from chemical and enzymatic cleavage and are thus involved in dormant spore's high resistance to UV light. This Priestia megaterium (Bacillus megaterium) protein is Small, acid-soluble spore protein C5 (SASP-C5).